Consider the following 207-residue polypeptide: Protein 6b (207 aa).

Residues 161–185 form a disordered region; sequence NTLEEGEDDDDEMDDEGEAGGAEPR. Acidic residues predominate over residues 164 to 178; sequence EEGEDDDDEMDDEGE.

Functionally, involved in tumor formation and increases auxin and cytokinin effects in host plants. The polypeptide is Protein 6b (6b) (Agrobacterium tumefaciens (strain 15955)).